We begin with the raw amino-acid sequence, 547 residues long: Chaperonin GroEL (547 aa).

Residues 30-33, lysine 51, 87-91, glycine 415, and aspartate 495 contribute to the ATP site; these read TLGP and DGTTT. The segment at 526–547 is disordered; the sequence is QDATPTASPDMGGMGGMGGGMM. Positions 537 to 547 are enriched in gly residues; sequence GGMGGMGGGMM.

This sequence belongs to the chaperonin (HSP60) family. As to quaternary structure, forms a cylinder of 14 subunits composed of two heptameric rings stacked back-to-back. Interacts with the co-chaperonin GroES.

The protein localises to the cytoplasm. It carries out the reaction ATP + H2O + a folded polypeptide = ADP + phosphate + an unfolded polypeptide.. Functionally, together with its co-chaperonin GroES, plays an essential role in assisting protein folding. The GroEL-GroES system forms a nano-cage that allows encapsulation of the non-native substrate proteins and provides a physical environment optimized to promote and accelerate protein folding. This Vesicomyosocius okutanii subsp. Calyptogena okutanii (strain HA) protein is Chaperonin GroEL.